The following is a 530-amino-acid chain: Protein transport protein SEC9 (530 aa).

Residues 1-274 form a disordered region; it reads MGIKKMFQKK…QPANDYNLDL (274 aa). The span at 8 to 22 shows a compositional bias: basic and acidic residues; the sequence is QKKEPTEQEIREELS. Composition is skewed to low complexity over residues 61–100 and 122–141; these read NPYANINPGTNNNNNNPYANDNGNNSTGNPNNNSNSNNGG and GSSPSPYAPTTSTTTRSSNP. Residues 142–160 show a composition bias toward polar residues; the sequence is YGNNNGSRSSQNTSSPYAK. Positions 161 to 202 are enriched in low complexity; the sequence is STNNSSYSNSPYSGSTVNNGNRGGHSNNSNSSAGGNPYAAGG. 2 stretches are compositionally biased toward polar residues: residues 203-228 and 258-268; these read RSSQSQNSRDNVYTAPATRTSTRQTQ and RNQQSSQQPAN. T-SNARE coiled-coil homology domains are found at residues 313–375 and 467–529; these read KFVK…VKEL and DDME…LNNI.

Belongs to the SNAP-25 family.

Its subcellular location is the membrane. Its function is as follows. Late secretory t-SNARE protein required for secretion and proper cytokinesis. Plays an important role in the secretion of virulence-associated extracellular enzymes and vesicle-mediated polarized hyphal growth. The polypeptide is Protein transport protein SEC9 (SEC9) (Candida albicans (strain SC5314 / ATCC MYA-2876) (Yeast)).